Here is an 807-residue protein sequence, read N- to C-terminus: Leucine--tRNA ligase (807 aa).

The 'HIGH' region motif lies at 40-51 (PYPSGTGLHVGH). The 'KMSKS' region motif lies at 576 to 580 (KMSKS). Lys-579 is a binding site for ATP.

This sequence belongs to the class-I aminoacyl-tRNA synthetase family.

The protein localises to the cytoplasm. It catalyses the reaction tRNA(Leu) + L-leucine + ATP = L-leucyl-tRNA(Leu) + AMP + diphosphate. The sequence is that of Leucine--tRNA ligase from Pelodictyon phaeoclathratiforme (strain DSM 5477 / BU-1).